A 91-amino-acid chain; its full sequence is Small ribosomal subunit protein bS18 (91 aa).

The protein belongs to the bacterial ribosomal protein bS18 family. As to quaternary structure, part of the 30S ribosomal subunit. Forms a tight heterodimer with protein bS6.

Binds as a heterodimer with protein bS6 to the central domain of the 16S rRNA, where it helps stabilize the platform of the 30S subunit. This Burkholderia vietnamiensis (strain G4 / LMG 22486) (Burkholderia cepacia (strain R1808)) protein is Small ribosomal subunit protein bS18.